Reading from the N-terminus, the 482-residue chain is UDP-N-acetylmuramate--L-alanine ligase (482 aa).

Gly123 to Thr129 contributes to the ATP binding site.

Belongs to the MurCDEF family.

It is found in the cytoplasm. It carries out the reaction UDP-N-acetyl-alpha-D-muramate + L-alanine + ATP = UDP-N-acetyl-alpha-D-muramoyl-L-alanine + ADP + phosphate + H(+). It functions in the pathway cell wall biogenesis; peptidoglycan biosynthesis. Its function is as follows. Cell wall formation. This is UDP-N-acetylmuramate--L-alanine ligase from Pseudomonas putida (strain ATCC 47054 / DSM 6125 / CFBP 8728 / NCIMB 11950 / KT2440).